Reading from the N-terminus, the 258-residue chain is UBX domain-containing protein 2A (258 aa).

Positions 1–14 (MKEVDNLDSIKEEW) are enriched in basic and acidic residues. Residues 1 to 30 (MKEVDNLDSIKEEWACETGPPDSQPLNDNQ) are disordered. Residues 1-152 (MKEVDNLDSI…SATPRIVSKA (152 aa)) form a required for interaction with CHRNA3 region. The interval 1 to 165 (MKEVDNLDSI…EVDNKSTLSA (165 aa)) is required for inhibition of CHRNA3 ubiquitination and translocation of CHRNA3 to the plasma membrane resulting in an increase in acetylcholine-gated nicotinic acetylcholine receptor currents. One can recognise an SEP domain in the interval 61–125 (QVDVNIKLWK…VEDKKNEVCM (65 aa)). Positions 168-258 (LNNLEPITRI…QKTAEPFRKL (91 aa)) are required for interaction with VCP. One can recognise a UBX domain in the interval 170–247 (NLEPITRIQI…DLKNAVIIQR (78 aa)).

As to quaternary structure, part of a complex composed of STUB1/CHIP, VCP/p97, CHRNA3, and UBXN2A that modulates the ubiquitination and endoplasmic reticulum-associated degradation (ERAD) of CHRNA3. Within the complex UBXN2A acts as a scaffold protein required for the interaction of CHRNA3 with VCP/p97, this interaction also inhibits CHRNA3 ubiquitination by STUB1/CHIP and subsequently ERAD. Interacts (via SEP domain) with CHRNA3 and interacts (via UBX domain) with VCP/P97; these interactions are required for the interaction of CHRNA3 with the STUB1-VCP-UBXN2A complex. Interacts with HSPA9/MOT-2 (via SBD domain); the interaction inhibits HSPA9/MOT-2 interaction with and degradation of p53, thereby promotes p53 translocation to the nucleus. Interacts with RICTOR. Post-translationally, ubiquitinated. As to expression, expressed in the prefrontal cortex (at protein level). Expressed in the habenula and hippocampus (at protein level). Expressed in peripheral ganglia.

Its subcellular location is the golgi apparatus. It localises to the endoplasmic reticulum. The protein resides in the perikaryon. The protein localises to the cell projection. It is found in the dendrite. Its subcellular location is the nucleus. It localises to the cytoplasm. In terms of biological role, acts to repress the ubiquitination and subsequent endoplasmic reticulum-associated degradation of CHRNA3 by the STUB1-VCP-UBXN2A complex in cortical neurons. Also acts to promote the translocation of CHRNA3 to the plasma membrane and subsequently increases plasma membrane acetylcholine-gated ion-channel activation. Plays a role in the inhibition of STUB1-mediated TP53 degradation, via its interaction with HSPA9 which acts to inhibit TP53 binding to HSPA9. Positively mediates the ubiquitination and proteosomal degradation of RICTOR, may thereby act as a negative regulator of the mTORC2 pathway. The chain is UBX domain-containing protein 2A from Mus musculus (Mouse).